The sequence spans 148 residues: Large ribosomal subunit protein bL9 (148 aa).

Belongs to the bacterial ribosomal protein bL9 family.

Functionally, binds to the 23S rRNA. In Sulfurimonas denitrificans (strain ATCC 33889 / DSM 1251) (Thiomicrospira denitrificans (strain ATCC 33889 / DSM 1251)), this protein is Large ribosomal subunit protein bL9.